A 373-amino-acid polypeptide reads, in one-letter code: tRNA-specific 2-thiouridylase MnmA (373 aa).

Residues 12–19 (GMSGGVDS) and Met38 contribute to the ATP site. The interval 98-100 (NPD) is interaction with target base in tRNA. Cys103 functions as the Nucleophile in the catalytic mechanism. An intrachain disulfide couples Cys103 to Cys200. Gly128 serves as a coordination point for ATP. The tract at residues 150 to 152 (KDQ) is interaction with tRNA. The active-site Cysteine persulfide intermediate is the Cys200. Positions 312–313 (RY) are interaction with tRNA.

The protein belongs to the MnmA/TRMU family. As to quaternary structure, interacts with TusE.

It localises to the cytoplasm. It catalyses the reaction S-sulfanyl-L-cysteinyl-[protein] + uridine(34) in tRNA + AH2 + ATP = 2-thiouridine(34) in tRNA + L-cysteinyl-[protein] + A + AMP + diphosphate + H(+). Functionally, catalyzes the 2-thiolation of uridine at the wobble position (U34) of tRNA(Lys), tRNA(Glu) and tRNA(Gln), leading to the formation of s(2)U34, the first step of tRNA-mnm(5)s(2)U34 synthesis. Sulfur is provided by IscS, via a sulfur-relay system. Binds ATP and its substrate tRNAs. The sequence is that of tRNA-specific 2-thiouridylase MnmA from Yersinia enterocolitica serotype O:8 / biotype 1B (strain NCTC 13174 / 8081).